The following is a 596-amino-acid chain: Cytochrome P450 monooxygenase FUM15 (596 aa).

The segment at 476–512 (DRWLSPKNGNREATEQSKFKIGNQKRDSTAAPEVTQE) is disordered. Basic and acidic residues predominate over residues 484–503 (GNREATEQSKFKIGNQKRDS). A heme-binding site is contributed by C536.

The protein belongs to the cytochrome P450 family. Heme is required as a cofactor.

Its subcellular location is the endoplasmic reticulum. Its pathway is secondary metabolite biosynthesis. Its function is as follows. Cytochrome P450 monooxygenase; part of the gene cluster that mediates the biosynthesis of fumonisins B1 (FB1), B2 (FB2), B3 (FB3), and B4 (FB4), which are carcinogenic mycotoxins. Within the pathway, FUM15 may be responsible for the hydroxylations at positions C-14 and/or C-15. Also plays a role in self-protection from FB1 toxicity, probably through derivatization of FB1, and may contribute to ceramide biosynthesis. The biosynthesis starts with the FUM1-catalyzed carbon chain assembly from one molecule of acetyl-CoA, eight molecules of malonyl-CoA, and two molecules of methionine (in S-adenosyl form). The C18 polyketide chain is released from the enzyme by a nucleophilic attack of a carbanion, which is derived from R-carbon of alanine by decarboxylation, on the carbonyl carbon of polyketide acyl chain. This step is catalyzed by the pyridoxal 5'-phosphate-dependent aminoacyl transferase FUM8. The resultant 3-keto intermediate is then stereospecifically reduced to a 3-hydroxyl product by reductase FUM13. Subsequent oxidations at C-10 by the cytochrome P450 monooxygenase FUM2, C-14 and C-15 by FUM6, FUM12 or FUM15, tricarballylic esterification of the hydroxyl groups on C-14 and C-15 by acyltransferase FUM14, and C-5 hydroxylation by 2-keto-glutarate-dependent dioxygenase FUM3 furnish the biosynthesis of fumonisins. The tricarballylic moieties are most likely derived from the citric acid cycle, and their addition to the carbon backbone may involve FUM7, FUM10, FUM11 and FUM14. This is Cytochrome P450 monooxygenase FUM15 from Gibberella moniliformis (strain M3125 / FGSC 7600) (Maize ear and stalk rot fungus).